The primary structure comprises 232 residues: Ribonuclease 3 (232 aa).

One can recognise an RNase III domain in the interval Leu6–Gly133. Residue Glu46 coordinates Mg(2+). Residue Asp50 is part of the active site. Positions 119 and 122 each coordinate Mg(2+). Residue Glu122 is part of the active site. Positions Asp160–Gly229 constitute a DRBM domain.

This sequence belongs to the ribonuclease III family. Homodimer. It depends on Mg(2+) as a cofactor.

Its subcellular location is the cytoplasm. The catalysed reaction is Endonucleolytic cleavage to 5'-phosphomonoester.. Its function is as follows. Digests double-stranded RNA. Involved in the processing of primary rRNA transcript to yield the immediate precursors to the large and small rRNAs (23S and 16S). Processes some mRNAs, and tRNAs when they are encoded in the rRNA operon. Processes pre-crRNA and tracrRNA of type II CRISPR loci if present in the organism. The chain is Ribonuclease 3 from Clostridium beijerinckii (strain ATCC 51743 / NCIMB 8052) (Clostridium acetobutylicum).